A 90-amino-acid chain; its full sequence is Heat shock protein beta-7 (90 aa).

The sHSP domain occupies 39 to 90 (PLTFPARPGGQGNIKTLGDAYEFTVDMRDFSPEDIIVTTSNNHIEVRAEKKP).

It belongs to the small heat shock protein (HSP20) family. As to quaternary structure, interacts with C-terminal domain of actin-binding protein 280. As to expression, found in both cardiac and skeletal muscle.

It is found in the cytoplasm. The protein localises to the nucleus. Its subcellular location is the cajal body. This is Heat shock protein beta-7 (Hspb7) from Rattus norvegicus (Rat).